The primary structure comprises 217 residues: MSATNNQNAASVFGRPWIFIRGVPSMKFLPPEGPTEIAFAGRSNVGKSSLINALVGHKGLARTSNTPGRTQELNYFVPDGYSGEADDLPPMALVDMPGYGYAQAPKEQVDAWTKLVFDYLRGRSTLKRVYVLIDARHGIKKNDEEVLALLDKAAVSYQIVLTKTDKIKAAGVPRLLAETLEKIRKRPAAFPEVLSTSSEKGEGIEELRAAIELAVAR.

The 185-residue stretch at 33–217 (GPTEIAFAGR…RAAIELAVAR (185 aa)) folds into the EngB-type G domain. GTP-binding positions include 41-48 (GRSNVGKS), 68-72 (GRTQE), 95-98 (DMPG), 162-165 (TKTD), and 196-198 (TSS). Positions 48 and 70 each coordinate Mg(2+).

Belongs to the TRAFAC class TrmE-Era-EngA-EngB-Septin-like GTPase superfamily. EngB GTPase family. The cofactor is Mg(2+).

Functionally, necessary for normal cell division and for the maintenance of normal septation. This is Probable GTP-binding protein EngB from Sinorhizobium medicae (strain WSM419) (Ensifer medicae).